Reading from the N-terminus, the 378-residue chain is GTP cyclohydrolase-2 (378 aa).

The DHBP synthase-like stretch occupies residues 1 to 180 (MEEVSSHVKS…IKDMIEFRIK (180 aa)). Residues 181–378 (SEKIVERVIE…KMGHLICFND (198 aa)) are GTP cyclohydrolase II. 229-233 (RIHSE) contacts GTP. Residues C234, C245, and C247 each contribute to the Zn(2+) site. GTP-binding positions include Q250, 273–275 (EGR), and T295. Catalysis depends on D307, which acts as the Proton acceptor. R309 serves as the catalytic Nucleophile. GTP-binding residues include T330 and K335.

In the N-terminal section; belongs to the DHBP synthase family. The protein in the C-terminal section; belongs to the GTP cyclohydrolase II family. It depends on Zn(2+) as a cofactor.

The enzyme catalyses GTP + 4 H2O = 2,5-diamino-6-hydroxy-4-(5-phosphoribosylamino)-pyrimidine + formate + 2 phosphate + 3 H(+). Its pathway is cofactor biosynthesis; riboflavin biosynthesis; 5-amino-6-(D-ribitylamino)uracil from GTP: step 1/4. Its function is as follows. Catalyzes the conversion of GTP to 2,5-diamino-6-ribosylamino-4(3H)-pyrimidinone 5'-phosphate (DARP), formate and pyrophosphate. The polypeptide is GTP cyclohydrolase-2 (ribA) (Archaeoglobus fulgidus (strain ATCC 49558 / DSM 4304 / JCM 9628 / NBRC 100126 / VC-16)).